The primary structure comprises 345 residues: Biotin synthase (345 aa).

The Radical SAM core domain occupies 49–276 (NQVQMSTLLS…ASFVRLSAGR (228 aa)). Residues Cys64, Cys68, and Cys71 each contribute to the [4Fe-4S] cluster site. Cys108, Cys139, Cys199, and Arg271 together coordinate [2Fe-2S] cluster.

It belongs to the radical SAM superfamily. Biotin synthase family. In terms of assembly, homodimer. [4Fe-4S] cluster serves as cofactor. [2Fe-2S] cluster is required as a cofactor.

It catalyses the reaction (4R,5S)-dethiobiotin + (sulfur carrier)-SH + 2 reduced [2Fe-2S]-[ferredoxin] + 2 S-adenosyl-L-methionine = (sulfur carrier)-H + biotin + 2 5'-deoxyadenosine + 2 L-methionine + 2 oxidized [2Fe-2S]-[ferredoxin]. The protein operates within cofactor biosynthesis; biotin biosynthesis; biotin from 7,8-diaminononanoate: step 2/2. Its function is as follows. Catalyzes the conversion of dethiobiotin (DTB) to biotin by the insertion of a sulfur atom into dethiobiotin via a radical-based mechanism. The polypeptide is Biotin synthase (Nitrosococcus oceani (strain ATCC 19707 / BCRC 17464 / JCM 30415 / NCIMB 11848 / C-107)).